We begin with the raw amino-acid sequence, 209 residues long: Ribosomal RNA large subunit methyltransferase E (209 aa).

S-adenosyl-L-methionine is bound by residues Gly-63, Trp-65, Asp-83, Asp-99, and Asp-124. Lys-164 functions as the Proton acceptor in the catalytic mechanism.

It belongs to the class I-like SAM-binding methyltransferase superfamily. RNA methyltransferase RlmE family.

It is found in the cytoplasm. The enzyme catalyses uridine(2552) in 23S rRNA + S-adenosyl-L-methionine = 2'-O-methyluridine(2552) in 23S rRNA + S-adenosyl-L-homocysteine + H(+). Functionally, specifically methylates the uridine in position 2552 of 23S rRNA at the 2'-O position of the ribose in the fully assembled 50S ribosomal subunit. The sequence is that of Ribosomal RNA large subunit methyltransferase E from Vibrio atlanticus (strain LGP32) (Vibrio splendidus (strain Mel32)).